Here is a 164-residue protein sequence, read N- to C-terminus: Phosphopantetheine adenylyltransferase (164 aa).

Threonine 14 is a binding site for substrate. ATP-binding positions include 14–15 and histidine 22; that span reads TF. 3 residues coordinate substrate: lysine 46, methionine 78, and arginine 92. Residues 93-95, glutamate 103, and 128-134 contribute to the ATP site; these read GLR and HAFISST.

Belongs to the bacterial CoaD family. As to quaternary structure, homohexamer. The cofactor is Mg(2+).

It is found in the cytoplasm. The catalysed reaction is (R)-4'-phosphopantetheine + ATP + H(+) = 3'-dephospho-CoA + diphosphate. Its pathway is cofactor biosynthesis; coenzyme A biosynthesis; CoA from (R)-pantothenate: step 4/5. Functionally, reversibly transfers an adenylyl group from ATP to 4'-phosphopantetheine, yielding dephospho-CoA (dPCoA) and pyrophosphate. In Vibrio vulnificus (strain CMCP6), this protein is Phosphopantetheine adenylyltransferase.